The sequence spans 238 residues: LexA repressor (238 aa).

The segment at residues 26–46 (FDEMKDALELRSKSGIHRLIS) is a DNA-binding region (H-T-H motif). Residues S159 and K197 each act as for autocatalytic cleavage activity in the active site.

This sequence belongs to the peptidase S24 family. In terms of assembly, homodimer.

It catalyses the reaction Hydrolysis of Ala-|-Gly bond in repressor LexA.. In terms of biological role, represses a number of genes involved in the response to DNA damage (SOS response), including recA and lexA. In the presence of single-stranded DNA, RecA interacts with LexA causing an autocatalytic cleavage which disrupts the DNA-binding part of LexA, leading to derepression of the SOS regulon and eventually DNA repair. The sequence is that of LexA repressor from Gluconobacter oxydans (strain 621H) (Gluconobacter suboxydans).